Consider the following 250-residue polypeptide: Kv channel-interacting protein 4 (250 aa).

The KIS stretch occupies residues 2–44 (NVRRVESISAQLEEASSTGGFLYAQNSTKRSIKERLMKLLPCS). Residues serine 17 and serine 56 each carry the phosphoserine modification. The 57-residue stretch at 61–117 (LEMATVRHRPEALELLEAQSKFTKKELQILYRGFKNECPSGVVNEETFKEIYSQFFP) folds into the EF-hand 1; degenerate domain. EF-hand domains are found at residues 120-155 (DSTTYAHFLFNAFDTDHNGAVSFEDFIKGLSILLRG), 156-191 (TVQEKLNWAFNLYDINKDGYITKEEMLDIMKAIYDM), and 204-239 (APRQHVETFFQKMDKNKDGVVTIDEFIESCQKDENI). Residues aspartate 133, aspartate 135, asparagine 137, aspartate 144, aspartate 169, asparagine 171, aspartate 173, tyrosine 175, glutamate 180, aspartate 217, asparagine 219, aspartate 221, and glutamate 228 each coordinate Ca(2+). The segment at 237–250 (ENIMRSMQLFENVI) is interaction with KCND2.

This sequence belongs to the recoverin family. Component of heteromultimeric potassium channels. Identified in potassium channel complexes containing KCND1, KCND2, KCND3, KCNIP1, KCNIP2, KCNIP3, KCNIP4, DPP6 and DPP10. Interacts with KCND2. Interacts with KCND3. Interacts with the C-terminus of PSEN2 and probably PSEN1.

Its subcellular location is the cell membrane. It is found in the cytoplasm. It localises to the peroxisome. In terms of biological role, regulatory subunit of Kv4/D (Shal)-type voltage-gated rapidly inactivating A-type potassium channels. Modulates KCND2 channel density, inactivation kinetics and rate of recovery from inactivation in a calcium-dependent and isoform-specific manner. Modulates KCND3/Kv4.3 currents. Isoform 4 does not increase KCND2 expression at the cell membrane. Isoform 4 retains KCND3 in the endoplasmic reticulum and negatively regulates its expression at the cell membrane. In Macaca fascicularis (Crab-eating macaque), this protein is Kv channel-interacting protein 4 (KCNIP4).